The chain runs to 211 residues: N-(5'-phosphoribosyl)anthranilate isomerase (211 aa).

This sequence belongs to the TrpF family.

It catalyses the reaction N-(5-phospho-beta-D-ribosyl)anthranilate = 1-(2-carboxyphenylamino)-1-deoxy-D-ribulose 5-phosphate. It participates in amino-acid biosynthesis; L-tryptophan biosynthesis; L-tryptophan from chorismate: step 3/5. This chain is N-(5'-phosphoribosyl)anthranilate isomerase, found in Methanococcus maripaludis (strain DSM 14266 / JCM 13030 / NBRC 101832 / S2 / LL).